A 353-amino-acid chain; its full sequence is Protein disulfide isomerase CRELD2 (353 aa).

Residues 1-24 form the signal peptide; the sequence is MRLPRRAALGLLPLLLLLPPAPEA. The short motif at 31–34 is the CXXC element; sequence CHRC. Intrachain disulfides connect C31–C34, C140–C154, C148–C166, and C168–C177. Positions 136 to 178 constitute an EGF-like 1 domain; sequence DCLACQGGSQRPCSGNGHCSGDGSRQGDGSCRCHMGYQGPLCT. An FU 1 repeat occupies 193 to 240; that stretch reads HSICTACDESCKTCSGLTNRDCGECEVGWVLDEGACVDVDECAAEPPP. N251 is a glycosylation site (N-linked (GlcNAc...) asparagine). Residues 253 to 302 form an FU 2 repeat; it reads SYTCEECDSSCVGCTGEGPGNCKECISGYAREHGQCADVDECSLAEKTCV. The CXXC signature appears at 263–266; that stretch reads CVGC. Cystine bridges form between C263–C266, C294–C308, C301–C317, and C319–C330. The 42-residue stretch at 290-331 folds into the EGF-like 2; calcium-binding domain; sequence DVDECSLAEKTCVRKNENCYNTPGSYVCVCPDGFEETEDACV. Residues 332–353 are disordered; it reads PPAEAEATEGESPTQLPSREDL. Over residues 342–353 the composition is skewed to polar residues; the sequence is ESPTQLPSREDL.

The protein belongs to the CRELD family. As to quaternary structure, interacts with CHRNA4. Component of a complex containing at least CRELD2, MANF, MATN3 and PDIA4. Ubiquitously expressed. Highly expressed in skeletal muscle, heart, liver, kidney and placenta.

It localises to the endoplasmic reticulum. The catalysed reaction is Catalyzes the rearrangement of -S-S- bonds in proteins.. Functionally, protein disulfide isomerase. Might play a role in the unfolded protein response. May regulate transport of alpha4-beta2 neuronal acetylcholine receptor. The protein is Protein disulfide isomerase CRELD2 (CRELD2) of Homo sapiens (Human).